We begin with the raw amino-acid sequence, 194 residues long: Anthranilate synthase component 2 (194 aa).

Residues 2–194 (KIFFIDNFDS…QSVGFLEGLL (193 aa)) form the Glutamine amidotransferase type-1 domain. Residue 57–59 (GPG) coordinates L-glutamine. C84 functions as the Nucleophile; for GATase activity in the catalytic mechanism. L-glutamine contacts are provided by residues Q88 and 134–135 (SL). Catalysis depends on for GATase activity residues H170 and E172.

As to quaternary structure, heterotetramer consisting of two non-identical subunits: a beta subunit (TrpG) and a large alpha subunit (TrpE).

It catalyses the reaction chorismate + L-glutamine = anthranilate + pyruvate + L-glutamate + H(+). It participates in amino-acid biosynthesis; L-tryptophan biosynthesis; L-tryptophan from chorismate: step 1/5. Functionally, part of a heterotetrameric complex that catalyzes the two-step biosynthesis of anthranilate, an intermediate in the biosynthesis of L-tryptophan. In the first step, the glutamine-binding beta subunit (TrpG) of anthranilate synthase (AS) provides the glutamine amidotransferase activity which generates ammonia as a substrate that, along with chorismate, is used in the second step, catalyzed by the large alpha subunit of AS (TrpE) to produce anthranilate. In the absence of TrpG, TrpE can synthesize anthranilate directly from chorismate and high concentrations of ammonia. This Helicobacter pylori (strain ATCC 700392 / 26695) (Campylobacter pylori) protein is Anthranilate synthase component 2 (trpG).